A 315-amino-acid chain; its full sequence is 4-hydroxy-3-methylbut-2-enyl diphosphate reductase (315 aa).

A [4Fe-4S] cluster-binding site is contributed by Cys-12. (2E)-4-hydroxy-3-methylbut-2-enyl diphosphate is bound by residues His-41 and His-74. The dimethylallyl diphosphate site is built by His-41 and His-74. Residues His-41 and His-74 each contribute to the isopentenyl diphosphate site. Residue Cys-96 participates in [4Fe-4S] cluster binding. His-124 serves as a coordination point for (2E)-4-hydroxy-3-methylbut-2-enyl diphosphate. Position 124 (His-124) interacts with dimethylallyl diphosphate. His-124 is an isopentenyl diphosphate binding site. Glu-126 functions as the Proton donor in the catalytic mechanism. Residue Thr-167 participates in (2E)-4-hydroxy-3-methylbut-2-enyl diphosphate binding. Cys-197 contributes to the [4Fe-4S] cluster binding site. The (2E)-4-hydroxy-3-methylbut-2-enyl diphosphate site is built by Ser-225, Ser-226, Asn-227, and Ser-269. Positions 225, 226, 227, and 269 each coordinate dimethylallyl diphosphate. Ser-225, Ser-226, Asn-227, and Ser-269 together coordinate isopentenyl diphosphate.

It belongs to the IspH family. In terms of assembly, homodimer. [4Fe-4S] cluster is required as a cofactor.

It carries out the reaction isopentenyl diphosphate + 2 oxidized [2Fe-2S]-[ferredoxin] + H2O = (2E)-4-hydroxy-3-methylbut-2-enyl diphosphate + 2 reduced [2Fe-2S]-[ferredoxin] + 2 H(+). The enzyme catalyses dimethylallyl diphosphate + 2 oxidized [2Fe-2S]-[ferredoxin] + H2O = (2E)-4-hydroxy-3-methylbut-2-enyl diphosphate + 2 reduced [2Fe-2S]-[ferredoxin] + 2 H(+). It participates in isoprenoid biosynthesis; dimethylallyl diphosphate biosynthesis; dimethylallyl diphosphate from (2E)-4-hydroxy-3-methylbutenyl diphosphate: step 1/1. Its pathway is isoprenoid biosynthesis; isopentenyl diphosphate biosynthesis via DXP pathway; isopentenyl diphosphate from 1-deoxy-D-xylulose 5-phosphate: step 6/6. Functionally, catalyzes the conversion of 1-hydroxy-2-methyl-2-(E)-butenyl 4-diphosphate (HMBPP) into a mixture of isopentenyl diphosphate (IPP) and dimethylallyl diphosphate (DMAPP). Acts in the terminal step of the DOXP/MEP pathway for isoprenoid precursor biosynthesis. The protein is 4-hydroxy-3-methylbut-2-enyl diphosphate reductase of Wigglesworthia glossinidia brevipalpis.